The chain runs to 313 residues: Ornithine carbamoyltransferase (313 aa).

Carbamoyl phosphate-binding positions include 61-64 (STRT), Gln88, Arg112, and 139-142 (HPCQ). L-ornithine is bound by residues Asn170, Asp228, and 232 to 233 (SM). Residues 268–269 (CL) and Arg296 each bind carbamoyl phosphate.

The protein belongs to the aspartate/ornithine carbamoyltransferase superfamily. OTCase family.

The protein localises to the cytoplasm. The catalysed reaction is carbamoyl phosphate + L-ornithine = L-citrulline + phosphate + H(+). It functions in the pathway amino-acid biosynthesis; L-arginine biosynthesis; L-arginine from L-ornithine and carbamoyl phosphate: step 1/3. Reversibly catalyzes the transfer of the carbamoyl group from carbamoyl phosphate (CP) to the N(epsilon) atom of ornithine (ORN) to produce L-citrulline. This Bordetella parapertussis (strain 12822 / ATCC BAA-587 / NCTC 13253) protein is Ornithine carbamoyltransferase.